The primary structure comprises 291 residues: 3-methyl-2-oxobutanoate hydroxymethyltransferase (291 aa).

The segment covering 1–10 has biased composition (polar residues); that stretch reads MTQLSAAQTP. Residues 1–20 form a disordered region; it reads MTQLSAAQTPQPKPADGNRA. Asp-71 and Asp-110 together coordinate Mg(2+). Residues 71–72, Asp-110, and Lys-140 each bind 3-methyl-2-oxobutanoate; that span reads DS. Glu-142 is a binding site for Mg(2+). Glu-208 serves as the catalytic Proton acceptor.

The protein belongs to the PanB family. As to quaternary structure, homodecamer; pentamer of dimers. Mg(2+) serves as cofactor.

The protein resides in the cytoplasm. The catalysed reaction is 3-methyl-2-oxobutanoate + (6R)-5,10-methylene-5,6,7,8-tetrahydrofolate + H2O = 2-dehydropantoate + (6S)-5,6,7,8-tetrahydrofolate. Its pathway is cofactor biosynthesis; (R)-pantothenate biosynthesis; (R)-pantoate from 3-methyl-2-oxobutanoate: step 1/2. Functionally, catalyzes the reversible reaction in which hydroxymethyl group from 5,10-methylenetetrahydrofolate is transferred onto alpha-ketoisovalerate to form ketopantoate. The chain is 3-methyl-2-oxobutanoate hydroxymethyltransferase from Streptomyces coelicolor (strain ATCC BAA-471 / A3(2) / M145).